The primary structure comprises 169 residues: Probable inosine/xanthosine triphosphatase (169 aa).

Aspartate 58 provides a ligand contact to Mg(2+).

Belongs to the YjjX NTPase family. Homodimer. The cofactor is Mg(2+). Mn(2+) is required as a cofactor.

The catalysed reaction is XTP + H2O = XDP + phosphate + H(+). It carries out the reaction ITP + H2O = IDP + phosphate + H(+). Functionally, phosphatase that hydrolyzes non-canonical purine nucleotides such as XTP and ITP to their respective diphosphate derivatives. Probably excludes non-canonical purines from DNA/RNA precursor pool, thus preventing their incorporation into DNA/RNA and avoiding chromosomal lesions. This Archaeoglobus fulgidus (strain ATCC 49558 / DSM 4304 / JCM 9628 / NBRC 100126 / VC-16) protein is Probable inosine/xanthosine triphosphatase.